The following is a 217-amino-acid chain: ATP-dependent Clp protease proteolytic subunit (217 aa).

S121 acts as the Nucleophile in catalysis. H146 is an active-site residue.

The protein belongs to the peptidase S14 family. As to quaternary structure, fourteen ClpP subunits assemble into 2 heptameric rings which stack back to back to give a disk-like structure with a central cavity, resembling the structure of eukaryotic proteasomes.

It localises to the cytoplasm. It carries out the reaction Hydrolysis of proteins to small peptides in the presence of ATP and magnesium. alpha-casein is the usual test substrate. In the absence of ATP, only oligopeptides shorter than five residues are hydrolyzed (such as succinyl-Leu-Tyr-|-NHMec, and Leu-Tyr-Leu-|-Tyr-Trp, in which cleavage of the -Tyr-|-Leu- and -Tyr-|-Trp bonds also occurs).. Functionally, cleaves peptides in various proteins in a process that requires ATP hydrolysis. Has a chymotrypsin-like activity. Plays a major role in the degradation of misfolded proteins. The polypeptide is ATP-dependent Clp protease proteolytic subunit (Burkholderia mallei (strain NCTC 10247)).